The following is a 140-amino-acid chain: MARFLIVEARFYDHLNDMLVAGARAALEAEGHEAEVLTVPGALEVPGAIAMAAENGEFDGFVAIGVVIRGETYHFEIVAGESARGILALTMDGIAIGNGILTTENEEQALERADPARKDKGGEAAKAAIALLKLQDRFGA.

5-amino-6-(D-ribitylamino)uracil-binding positions include Phe-11, 42-44, and 66-68; these read ALE and VVI. 71 to 72 contacts (2S)-2-hydroxy-3-oxobutyl phosphate; it reads ET. The active-site Proton donor is the His-74. Asn-98 lines the 5-amino-6-(D-ribitylamino)uracil pocket. Residue Arg-112 coordinates (2S)-2-hydroxy-3-oxobutyl phosphate.

The protein belongs to the DMRL synthase family.

It catalyses the reaction (2S)-2-hydroxy-3-oxobutyl phosphate + 5-amino-6-(D-ribitylamino)uracil = 6,7-dimethyl-8-(1-D-ribityl)lumazine + phosphate + 2 H2O + H(+). Its pathway is cofactor biosynthesis; riboflavin biosynthesis; riboflavin from 2-hydroxy-3-oxobutyl phosphate and 5-amino-6-(D-ribitylamino)uracil: step 1/2. Catalyzes the formation of 6,7-dimethyl-8-ribityllumazine by condensation of 5-amino-6-(D-ribitylamino)uracil with 3,4-dihydroxy-2-butanone 4-phosphate. This is the penultimate step in the biosynthesis of riboflavin. The sequence is that of 6,7-dimethyl-8-ribityllumazine synthase from Erythrobacter litoralis (strain HTCC2594).